Reading from the N-terminus, the 757-residue chain is Dapper homolog 2 (757 aa).

Residues 1–281 form an inhibition of Nodal signaling region; it reads MWAPSGQGPA…QSPLFALPKE (281 aa). A coiled-coil region spans residues 55–107; that stretch reads RGQELRLEAALTALREQLSRLRRQDAGLKTHLDQLDQQISELQLDVSRSSCEA. Disordered regions lie at residues 486-540, 584-684, and 696-728; these read RRRV…CSES, RWQS…EGCF, and AEAGQGGWAWPRVPPQQPSRAPGNTRPPLPPVP. 2 stretches are compositionally biased toward basic and acidic residues: residues 505–516 and 631–644; these read ERQRVTERDPSR and ACARCESDPSEHSA. Polar residues predominate over residues 645-656; that stretch reads DCTSLYHSTIAE. Residues 664-673 show a composition bias toward basic and acidic residues; it reads SDHTANRFGD. The PDZ-binding signature appears at 754–757; that stretch reads MTMV.

It belongs to the dapper family. As to quaternary structure, can form homodimers and heterodimers with DACT1 or DACT3. Interacts with CSNK1D, PKA catalytic subunit, PKC-type kinase, CSNK2B, DVL1, DVL2, DVL3, VANGL1, VANGL2, TGFBR1, CTNNB1, CTNND2, CTNND1, LEF1, TCF7, TCF7L1 and HDAC1. Expressed in kidney (inner medullary collecting duct). Expressed in epidermal keratinocytes and hair follicles.

In terms of biological role, involved in regulation of intracellular signaling pathways during development. Negatively regulates the Nodal signaling pathway, possibly by promoting the lysosomal degradation of Nodal receptors, such as TGFBR1. May be involved in control of the morphogenetic behavior of kidney ureteric bud cells by keeping cells epithelial and restraining their mesenchymal character. May play an inhibitory role in the re-epithelialization of skin wounds by attenuating TGF-beta signaling. In Mus musculus (Mouse), this protein is Dapper homolog 2 (Dact2).